The sequence spans 676 residues: Symportin 1 (676 aa).

Basic residues predominate over residues 1–10 (MGKTRRNRVR). The interval 1-28 (MGKTRRNRVRNRTDPIAKPVKPPTDPEL) is disordered. Residues 183-216 (TILRLLFRLISADIAPQDIYEEAISCLTTLSEDN) form an ARM 1 repeat. The interval 325–385 (KGNQGSRESP…EDDEDDDDDS (61 aa)) is disordered. Composition is skewed to acidic residues over residues 338–354 (ADEEWNGFDDADGDAMD) and 363–385 (EDQEEDYEEIDVKEDDEDDDDDS). The ARM 2 repeat unit spans residues 420-453 (TAVPQLIRLSNLPIDSDESLTIQSHALSALNNIS).

It belongs to the nuclear import and ribosome assembly adapter family. As to quaternary structure, component of a hexameric 5S RNP precursor complex, composed of 5S RNA, RRS1, RPF2, RPL5, RPL11 and SYO1; this complex acts as a precursor for ribosome assembly.

Its function is as follows. Involved in ribosomal large subunit assembly. The sequence is that of Symportin 1 from Chaetomium thermophilum (strain DSM 1495 / CBS 144.50 / IMI 039719) (Thermochaetoides thermophila).